The following is a 135-amino-acid chain: Phosphomevalonate dehydratase small subunit (135 aa).

Ser67 acts as the Proton acceptor in catalysis.

It belongs to the AcnX type II small subunit family. In terms of assembly, heterodimer composed of a large subunit (PMDh-L) and a small subunit (PMDh-S).

It catalyses the reaction (R)-5-phosphomevalonate = (2E)-3-methyl-5-phosphooxypent-2-enoate + H2O. It participates in isoprenoid biosynthesis; isopentenyl diphosphate biosynthesis via mevalonate pathway. In terms of biological role, component of a hydro-lyase that catalyzes the dehydration of mevalonate 5-phosphate (MVA5P) to form trans-anhydromevalonate 5-phosphate (tAHMP). Involved in the archaeal mevalonate (MVA) pathway, which provides fundamental precursors for isoprenoid biosynthesis, such as isopentenyl diphosphate (IPP) and dimethylallyl diphosphate (DMAPP). The protein is Phosphomevalonate dehydratase small subunit of Methanopyrus kandleri (strain AV19 / DSM 6324 / JCM 9639 / NBRC 100938).